A 231-amino-acid chain; its full sequence is ATP-dependent dethiobiotin synthetase BioD 2 (231 aa).

13 to 18 (SVGKTV) is an ATP binding site. Threonine 17 contacts Mg(2+). The active site involves lysine 38. ATP contacts are provided by residues aspartate 55, 112 to 115 (EGTG), 172 to 173 (NR), 201 to 203 (PYL), and glutamine 208. The Mg(2+) site is built by aspartate 55 and glutamate 112.

Belongs to the dethiobiotin synthetase family. As to quaternary structure, homodimer. The cofactor is Mg(2+).

The protein localises to the cytoplasm. The enzyme catalyses (7R,8S)-7,8-diammoniononanoate + CO2 + ATP = (4R,5S)-dethiobiotin + ADP + phosphate + 3 H(+). Its pathway is cofactor biosynthesis; biotin biosynthesis; biotin from 7,8-diaminononanoate: step 1/2. Catalyzes a mechanistically unusual reaction, the ATP-dependent insertion of CO2 between the N7 and N8 nitrogen atoms of 7,8-diaminopelargonic acid (DAPA, also called 7,8-diammoniononanoate) to form a ureido ring. The chain is ATP-dependent dethiobiotin synthetase BioD 2 from Escherichia coli O157:H7.